The following is a 458-amino-acid chain: Protein unc-93 homolog A (458 aa).

A run of 5 helical transmembrane segments spans residues 8–28 (VLVV…LQNL), 42–62 (TLST…PILI), 69–89 (WTIV…FHAN), 90–110 (WYTL…LWSA), and 140–160 (IFFL…SLVF). N-linked (GlcNAc...) asparagine glycosylation occurs at asparagine 190. 7 helical membrane-spanning segments follow: residues 202 to 222 (TLLG…AVFL), 258 to 275 (LCLL…QEFL), 286 to 306 (CALG…MTAL), 321 to 341 (AALY…FLLW), 345 to 365 (TNQL…DAVW), 390 to 410 (LGEA…CVST), and 412 to 432 (LYIL…VEYL).

This sequence belongs to the unc-93 family.

It localises to the cell membrane. This chain is Protein unc-93 homolog A (Unc93a), found in Mus musculus (Mouse).